A 417-amino-acid polypeptide reads, in one-letter code: Serine hydroxymethyltransferase (417 aa).

(6S)-5,6,7,8-tetrahydrofolate-binding positions include Leu122 and 126–128; that span reads GHL. Lys230 is subject to N6-(pyridoxal phosphate)lysine. (6S)-5,6,7,8-tetrahydrofolate is bound at residue 355 to 357; sequence SPF.

Belongs to the SHMT family. In terms of assembly, homodimer. Pyridoxal 5'-phosphate is required as a cofactor.

It localises to the cytoplasm. The catalysed reaction is (6R)-5,10-methylene-5,6,7,8-tetrahydrofolate + glycine + H2O = (6S)-5,6,7,8-tetrahydrofolate + L-serine. The protein operates within one-carbon metabolism; tetrahydrofolate interconversion. It participates in amino-acid biosynthesis; glycine biosynthesis; glycine from L-serine: step 1/1. In terms of biological role, catalyzes the reversible interconversion of serine and glycine with tetrahydrofolate (THF) serving as the one-carbon carrier. This reaction serves as the major source of one-carbon groups required for the biosynthesis of purines, thymidylate, methionine, and other important biomolecules. Also exhibits THF-independent aldolase activity toward beta-hydroxyamino acids, producing glycine and aldehydes, via a retro-aldol mechanism. The chain is Serine hydroxymethyltransferase from Francisella tularensis subsp. holarctica (strain LVS).